We begin with the raw amino-acid sequence, 424 residues long: Protein ORF114 (424 aa).

The protein resides in the host cytoplasm. In terms of biological role, plays a role in per os infectivity in vivo. Facilitates embedding of occlusion-derived viruses (ODVs) into occlusion bodies (OBs). The polypeptide is Protein ORF114 (Lepidoptera (butterflies and moths)).